The sequence spans 465 residues: Mothers against decapentaplegic homolog 1 (465 aa).

Met1 carries the post-translational modification N-acetylmethionine. The 125-residue stretch at Pro12–Pro136 folds into the MH1 domain. Zn(2+) contacts are provided by Cys64, Cys109, Cys121, and His126. The interval Asn162–Met246 is disordered. Residues Pro179–Pro212 show a composition bias toward low complexity. The segment covering Asp221 to Asp232 has biased composition (pro residues). Positions Trp271–Ser465 constitute an MH2 domain. Thr322 bears the Phosphothreonine; by MINK1, TNIK and MAP4K4 mark. The interval Lys418–Asp428 is L3 loop. Phosphoserine occurs at positions 463 and 465.

This sequence belongs to the dwarfin/SMAD family. Found in a complex with SMAD4 and YY1. Interacts with HGS, NANOG and ZCCHC12. Upon C-terminus phosphorylation: forms trimers with another SMAD1 and the co-SMAD SMAD4. Interacts with PEBP2-alpha subunit, CREB-binding protein (CBP), p300, SMURF1, SMURF2, USP15 and HOXC8. Associates with ZNF423 or ZNF521 in response to BMP2 leading to activate transcription of BMP target genes. Interacts with SKOR1. Interacts (via MH2 domain) with LEMD3. Binding to LEMD3 results in at least a partial reduction of receptor-mediated phosphorylation. Forms a ternary complex with PSMB4 and OAZ1 before PSMB4 is incorporated into the 20S proteasome. Interacts (via MH2 domain) with FAM83G (via MH2 domain); in a SMAD4-independent manner. Interacts with ZC3H3. Interacts with TMEM119. Interacts (via MH1 and MH2 domains) with ZNF8. Interacts with RANBP3L; the interaction increases when SMAD1 is not phosphorylated and mediates SMAD1 nuclear export. Interacts with EGR1; this interaction inhibits SMAD1 dephosphorylation. Interacts with SMAD6. Interacts with YAP1. Interacts with MTMR4; negatively regulates BMP signaling through SMAD1 dephosphorylation and retention in endosomes. Phosphorylation of the C-terminal SVS motif by BMP type 1 receptor kinase activates SMAD1 by promoting dissociation from the receptor and trimerization with SMAD4. Phosphorylation by ERK2 MAP kinase in response to EGF or HGF prevents SMAD1 nuclear accumulation and transcriptional activity in response to BMP. Dephosphorylation, probably by PPM1A, induces its export from the nucleus to the cytoplasm. Dephosphorylation is inhibited by association with EGR1. Phosphorylation by CDK8/9 creates binding sites for YAP1, and subsequent phosphorylation by GSK3 switches off YAP1 binding and adds binding sites for SMURF1. In terms of processing, ubiquitinated by SMAD-specific E3 ubiquitin ligase SMURF1, leading to its degradation. Monoubiquitinated, leading to prevent DNA-binding. Deubiquitination by USP15 alleviates inhibition and promotes activation of TGF-beta target genes. Dephosphorylation, probably by PPM1A, induces its export from the nucleus to the cytoplasm. Phospho-SMAD1 is ubiquitinated by CHIP leading to disruption of the SMAD1-SMAD4 complex. As to expression, ubiquitous.

The protein localises to the cytoplasm. It is found in the nucleus. Its function is as follows. Transcriptional modulator that plays a role in various cellular processes, including embryonic development, cell differentiation, and tissue homeostasis. Upon BMP ligand binding to their receptors at the cell surface, is phosphorylated by activated type I BMP receptors (BMPRIs) and associates with SMAD4 to form a heteromeric complex which translocates into the nucleus acting as transcription factor. In turn, the hetero-trimeric complex recognizes cis-regulatory elements containing Smad Binding Elements (SBEs) to modulate the outcome of the signaling network. SMAD1/OAZ1/PSMB4 complex mediates the degradation of the CREBBP/EP300 repressor SNIP1. Positively regulates BMP4-induced expression of odontogenic development regulator MSX1 following IPO7-mediated nuclear import. This is Mothers against decapentaplegic homolog 1 (Smad1) from Mus musculus (Mouse).